The following is a 68-amino-acid chain: Large ribosomal subunit protein uL29 (68 aa).

Belongs to the universal ribosomal protein uL29 family.

This is Large ribosomal subunit protein uL29 from Streptococcus uberis (strain ATCC BAA-854 / 0140J).